The primary structure comprises 657 residues: UvrABC system protein B (657 aa).

One can recognise a Helicase ATP-binding domain in the interval 25–182 (KSIKQGNEFQ…KKLIEIQYER (158 aa)). 38–45 (GVTGSGKT) lines the ATP pocket. The short motif at 91–114 (YYDYYQPEAYVPQTDTFIEKDASI) is the Beta-hairpin element. The 167-residue stretch at 429 to 595 (QIDDLYTEIQ…TINKEVRELI (167 aa)) folds into the Helicase C-terminal domain. The UVR domain maps to 621 to 656 (KKLIKEYTDEMKLAAKNLQFERAAQLRDKIEELKGK).

This sequence belongs to the UvrB family. As to quaternary structure, forms a heterotetramer with UvrA during the search for lesions. Interacts with UvrC in an incision complex.

Its subcellular location is the cytoplasm. The UvrABC repair system catalyzes the recognition and processing of DNA lesions. A damage recognition complex composed of 2 UvrA and 2 UvrB subunits scans DNA for abnormalities. Upon binding of the UvrA(2)B(2) complex to a putative damaged site, the DNA wraps around one UvrB monomer. DNA wrap is dependent on ATP binding by UvrB and probably causes local melting of the DNA helix, facilitating insertion of UvrB beta-hairpin between the DNA strands. Then UvrB probes one DNA strand for the presence of a lesion. If a lesion is found the UvrA subunits dissociate and the UvrB-DNA preincision complex is formed. This complex is subsequently bound by UvrC and the second UvrB is released. If no lesion is found, the DNA wraps around the other UvrB subunit that will check the other stand for damage. In Clostridium botulinum (strain Eklund 17B / Type B), this protein is UvrABC system protein B.